The sequence spans 195 residues: Protein GrpE (195 aa).

Positions 1–20 are enriched in basic and acidic residues; sequence MSSKEQKTPDEQVLDQKEAA. Positions 1 to 40 are disordered; the sequence is MSSKEQKTPDEQVLDQKEAAKGQQADAAPETADVADPRDA.

The protein belongs to the GrpE family. As to quaternary structure, homodimer.

Its subcellular location is the cytoplasm. Participates actively in the response to hyperosmotic and heat shock by preventing the aggregation of stress-denatured proteins, in association with DnaK and GrpE. It is the nucleotide exchange factor for DnaK and may function as a thermosensor. Unfolded proteins bind initially to DnaJ; upon interaction with the DnaJ-bound protein, DnaK hydrolyzes its bound ATP, resulting in the formation of a stable complex. GrpE releases ADP from DnaK; ATP binding to DnaK triggers the release of the substrate protein, thus completing the reaction cycle. Several rounds of ATP-dependent interactions between DnaJ, DnaK and GrpE are required for fully efficient folding. This chain is Protein GrpE, found in Pectobacterium carotovorum subsp. carotovorum (strain PC1).